Consider the following 481-residue polypeptide: Keratin, type I cytoskeletal 39 (481 aa).

The disordered stretch occupies residues 1-25 (MDTKGSTVTISSSTPPQNCSGNTNV). The tract at residues 1-90 (MDTKGSTVTI…RCSDGINSHE (90 aa)) is head. Positions 90–401 (EKETMQILNE…SLLESLDGRL (312 aa)) constitute an IF rod domain. The coil 1A stretch occupies residues 91 to 125 (KETMQILNERLASYLEKVRMLEGENADLEDKIQEE). The linker 1 stretch occupies residues 126–136 (CSKTLPILCPD). Residues 137–237 (YLSYYTTIEQ…HEEEINSLQC (101 aa)) form a coil 1B region. The linker 12 stretch occupies residues 238 to 253 (QLGDRINIEVTAAPSV). Residues 254 to 397 (DLNQILQKMR…ATYRSLLESL (144 aa)) form a coil 2 region. A tail region spans residues 398–481 (DGRLPCNPCT…PCYITRPAKV (84 aa)).

The protein belongs to the intermediate filament family. Heterotetramer of two type I and two type II keratins.

May play a role in late hair differentiation. In Rattus norvegicus (Rat), this protein is Keratin, type I cytoskeletal 39 (Krt39).